The primary structure comprises 109 residues: Spermidine export protein MdtI (109 aa).

Over 1–5 the chain is Periplasmic; the sequence is MAQFE. The chain crosses the membrane as a helical span at residues 6–26; it reads WVHAAWLALAIVLEIIANVFL. The Cytoplasmic segment spans residues 27 to 35; sequence KFSDGFRRK. A helical transmembrane segment spans residues 36-56; that stretch reads IFGLLSLAAVLAAFSALSQAV. At 57 to 63 the chain is on the periplasmic side; that stretch reads KGIDLSV. Residues 64-84 form a helical membrane-spanning segment; the sequence is AYALWGGFGIAATLAAGWILF. At 85-87 the chain is on the cytoplasmic side; that stretch reads GQR. Residues 88–108 traverse the membrane as a helical segment; the sequence is LNRKGWIGLVLLLAGMIMVKL. A109 is a topological domain (periplasmic).

The protein belongs to the drug/metabolite transporter (DMT) superfamily. Small multidrug resistance (SMR) (TC 2.A.7.1) family. MdtI subfamily. In terms of assembly, forms a complex with MdtJ.

Its subcellular location is the cell inner membrane. Catalyzes the excretion of spermidine. This Escherichia coli O6:H1 (strain CFT073 / ATCC 700928 / UPEC) protein is Spermidine export protein MdtI (mdtI).